The following is a 249-amino-acid chain: 2,3-bisphosphoglycerate-dependent phosphoglycerate mutase (249 aa).

Substrate-binding positions include 9–16 (RHGQSQWN), 22–23 (TG), Arg-61, 88–91 (ERHY), Lys-99, 115–116 (RR), and 184–185 (GN). Residue His-10 is the Tele-phosphohistidine intermediate of the active site. Glu-88 (proton donor/acceptor) is an active-site residue.

The protein belongs to the phosphoglycerate mutase family. BPG-dependent PGAM subfamily. Homodimer.

The catalysed reaction is (2R)-2-phosphoglycerate = (2R)-3-phosphoglycerate. It functions in the pathway carbohydrate degradation; glycolysis; pyruvate from D-glyceraldehyde 3-phosphate: step 3/5. Catalyzes the interconversion of 2-phosphoglycerate and 3-phosphoglycerate. This Xanthomonas campestris pv. campestris (strain B100) protein is 2,3-bisphosphoglycerate-dependent phosphoglycerate mutase.